The primary structure comprises 485 residues: Endo-1,4-beta-xylanase C (485 aa).

The N-terminal stretch at 1–19 is a signal peptide; the sequence is MKFLQIIPVLLSLTSTTLA. Positions 34–234 constitute a GH11 domain; sequence KETGNKVGTI…GNGGVSGTAD (201 aa). 2 N-linked (GlcNAc...) asparagine glycosylation sites follow: asparagine 56 and asparagine 107. Glutamate 128 functions as the Nucleophile in the catalytic mechanism. The N-linked (GlcNAc...) asparagine glycan is linked to asparagine 175. Catalysis depends on glutamate 221, which acts as the Proton donor. Residues 250 to 450 are disordered; sequence ASPAPAGGAP…PQNASDGGNC (201 aa). 2 stretches are compositionally biased toward low complexity: residues 265–330 and 344–354; these read AGND…QGQH and GSDFNNWSQGG. A run of 7 repeats spans residues 275–280, 281–286, 287–292, 293–298, 299–304, 310–315, and 316–321. The interval 275 to 321 is 7 X 6 AA tandem repeats of G-Q-Q-P-P-Q; it reads GQQPPQGQQPPQGQQPPQGQQPPQGQQPPQGNDQQGQQPPQGQQPPQ. The N-linked (GlcNAc...) asparagine glycan is linked to asparagine 349. 8 consecutive repeat copies span residues 353–361, 362–370, 371–379, 380–388, 389–397, 399–407, 408–416, and 417–425. Residues 353–425 form an 8 X 9 AA tandem repeats of G-G-[SN]-P-W-G-G-N-Q region; sequence GGSPWGGNQG…QGGNPWGGNQ (73 aa). Over residues 355–425 the composition is skewed to gly residues; that stretch reads SPWGGNQGGS…QGGNPWGGNQ (71 aa). The segment covering 426–445 has biased composition (low complexity); it reads WGAPQNAAAPQSAAAPQNAS. Residue asparagine 443 is glycosylated (N-linked (GlcNAc...) asparagine). The region spanning 449-484 is the CBM1 domain; the sequence is NCASLWGQCGGQGYNGPSCCSEGSCKPINEYFHQCQ.

It belongs to the glycosyl hydrolase 11 (cellulase G) family.

Its subcellular location is the secreted. The enzyme catalyses Endohydrolysis of (1-&gt;4)-beta-D-xylosidic linkages in xylans.. It participates in glycan degradation; xylan degradation. Functionally, endo-1,4-beta-xylanase involved in the hydrolysis of xylan, a major structural heterogeneous polysaccharide found in plant biomass representing the second most abundant polysaccharide in the biosphere, after cellulose. In Neocallimastix patriciarum (Rumen fungus), this protein is Endo-1,4-beta-xylanase C (xynC).